We begin with the raw amino-acid sequence, 224 residues long: 7-cyano-7-deazaguanine synthase (224 aa).

10–20 (LSGGLDSATVV) serves as a coordination point for ATP. 4 residues coordinate Zn(2+): C189, C199, C202, and C205.

This sequence belongs to the QueC family. Zn(2+) is required as a cofactor.

The catalysed reaction is 7-carboxy-7-deazaguanine + NH4(+) + ATP = 7-cyano-7-deazaguanine + ADP + phosphate + H2O + H(+). Its pathway is purine metabolism; 7-cyano-7-deazaguanine biosynthesis. In terms of biological role, catalyzes the ATP-dependent conversion of 7-carboxy-7-deazaguanine (CDG) to 7-cyano-7-deazaguanine (preQ(0)). This is 7-cyano-7-deazaguanine synthase from Pseudomonas putida (strain W619).